Here is a 321-residue protein sequence, read N- to C-terminus: Glucokinase (321 aa).

An ATP-binding site is contributed by 8-13; the sequence is GDVGGT.

This sequence belongs to the bacterial glucokinase family.

The protein resides in the cytoplasm. It catalyses the reaction D-glucose + ATP = D-glucose 6-phosphate + ADP + H(+). This Citrobacter koseri (strain ATCC BAA-895 / CDC 4225-83 / SGSC4696) protein is Glucokinase.